A 161-amino-acid chain; its full sequence is Ribosome maturation factor RimP (161 aa).

Belongs to the RimP family.

Its subcellular location is the cytoplasm. Functionally, required for maturation of 30S ribosomal subunits. This is Ribosome maturation factor RimP from Rickettsia typhi (strain ATCC VR-144 / Wilmington).